Here is a 143-residue protein sequence, read N- to C-terminus: MLRTMLKSKIHRATVTQADLHYVGSVTIDADLMDAADLLEGEQVTIVDIDNGARLVTYAITGERGSGVIGINGAAAHLVHPGDLVILIAYGTMEEAEARAYQPRIVFVDADNKPVDLGHDPAFVPDFEIAGAAELLDPRIVAR.

The active-site Schiff-base intermediate with substrate; via pyruvic acid is the Ser-25. Ser-25 carries the pyruvic acid (Ser) modification. Position 57 (Thr-57) interacts with substrate. Residue Tyr-58 is the Proton donor of the active site. 73 to 75 (GAA) contributes to the substrate binding site.

It belongs to the PanD family. As to quaternary structure, heterooctamer of four alpha and four beta subunits. Requires pyruvate as cofactor. Is synthesized initially as an inactive proenzyme, which is activated by self-cleavage at a specific serine bond to produce a beta-subunit with a hydroxyl group at its C-terminus and an alpha-subunit with a pyruvoyl group at its N-terminus.

It is found in the cytoplasm. It carries out the reaction L-aspartate + H(+) = beta-alanine + CO2. It participates in cofactor biosynthesis; (R)-pantothenate biosynthesis; beta-alanine from L-aspartate: step 1/1. Its function is as follows. Catalyzes the pyruvoyl-dependent decarboxylation of aspartate to produce beta-alanine. The protein is Aspartate 1-decarboxylase of Mycolicibacterium paratuberculosis (strain ATCC BAA-968 / K-10) (Mycobacterium paratuberculosis).